The chain runs to 246 residues: MSSSNACASPSPFPAVTKLHVDSVTFVPSVKSPASSNPLFLGGAGVRGLDIQGKFVIFTVIGVYLEGNAVPSLSVKWKGKTTEELTESIPFFREIVTGAFEKFIKVTMKLPLTGQQYSEKVTENCVAIWKQLGLYTDCEAKAVEKFLEIFKEETFPPGSSILFALSPTGSLTVAFSKDDSIPETGIAVIENKLLAEAVLESIIGKNGVSPGTRLSVAERLSQLMMKNKDEKEVSDHSVEEKLAKEN.

Residues T59, N124, and S201 each coordinate substrate.

It belongs to the chalcone isomerase family. As to expression, mostly expressed in siliques and flowers, and, to a lower extent, in leaves.

It carries out the reaction a chalcone = a flavanone.. It functions in the pathway secondary metabolite biosynthesis; flavonoid biosynthesis. Functionally, catalyzes the intramolecular cyclization of bicyclic chalcones into tricyclic (S)-flavanones. Responsible for the isomerization of 4,2',4',6'-tetrahydroxychalcone (also termed chalcone) into naringenin. This is Chalcone--flavanone isomerase 1 (CHI1) from Arabidopsis thaliana (Mouse-ear cress).